The primary structure comprises 41 residues: Large ribosomal subunit protein bL36 (41 aa).

The protein belongs to the bacterial ribosomal protein bL36 family.

In Brucella abortus (strain S19), this protein is Large ribosomal subunit protein bL36.